Here is an 88-residue protein sequence, read N- to C-terminus: UPF0250 protein Sputcn32_2874 (88 aa).

Belongs to the UPF0250 family.

The protein is UPF0250 protein Sputcn32_2874 of Shewanella putrefaciens (strain CN-32 / ATCC BAA-453).